Consider the following 526-residue polypeptide: Histidine ammonia-lyase (526 aa).

Residues 143–145 (ASG) constitute a cross-link (5-imidazolinone (Ala-Gly)). S144 carries the 2,3-didehydroalanine (Ser) modification.

It belongs to the PAL/histidase family. In terms of processing, contains an active site 4-methylidene-imidazol-5-one (MIO), which is formed autocatalytically by cyclization and dehydration of residues Ala-Ser-Gly.

The protein resides in the cytoplasm. The catalysed reaction is L-histidine = trans-urocanate + NH4(+). The protein operates within amino-acid degradation; L-histidine degradation into L-glutamate; N-formimidoyl-L-glutamate from L-histidine: step 1/3. This chain is Histidine ammonia-lyase, found in Aromatoleum aromaticum (strain DSM 19018 / LMG 30748 / EbN1) (Azoarcus sp. (strain EbN1)).